A 1657-amino-acid chain; its full sequence is Thrombospondin type-1 domain-containing protein 7A (1657 aa).

The signal sequence occupies residues Met1–Ala47. Over Ala48–Trp1607 the chain is Extracellular. TSP type-1 domains follow at residues Thr57–Asp116, Glu120–Gln192, and Asp194–Glu247. Residue Asn234 is glycosylated (N-linked (GlcNAc...) asparagine). The interval Met265–Arg311 is disordered. Residues His267 to Lys315 adopt a coiled-coil conformation. Basic residues predominate over residues Arg269 to Asn280. Positions Lys281–Leu299 are enriched in basic and acidic residues. Over residues Ile300–Gln309 the composition is skewed to basic residues. N-linked (GlcNAc...) asparagine glycosylation occurs at Asn332. 16 consecutive TSP type-1 domains span residues Glu360–Gly416, Ala423–Pro510, Glu512–Tyr574, Asp634–Thr695, Val696–Lys769, Asp771–Gln831, Ser832–Gln904, Asp906–Asp959, Lys960–Pro1033, Asp1035–Asn1095, Gln1096–Pro1163, Cys1166–Tyr1220, His1221–Pro1284, Asn1286–Tyr1341, Arg1342–Pro1412, and Asp1414–Tyr1475. 3 disulfides stabilise this stretch: Cys435–Cys505, Cys455–Cys509, and Cys466–Cys494. The N-linked (GlcNAc...) asparagine glycan is linked to Asn450. An N-linked (GlcNAc...) asparagine glycan is attached at Asn500. 2 disulfides stabilise this stretch: Cys635-Cys677 and Cys646-Cys650. An N-linked (GlcNAc...) asparagine glycan is attached at Asn679. Cystine bridges form between Cys689–Cys694, Cys707–Cys764, Cys728–Cys768, Cys739–Cys752, Cys772–Cys814, Cys783–Cys787, and Cys824–Cys830. N-linked (GlcNAc...) asparagine glycosylation occurs at Asn717. Asn968 carries N-linked (GlcNAc...) asparagine glycosylation. Intrachain disulfides connect Cys972–Cys1028, Cys994–Cys1032, Cys1005–Cys1018, Cys1036–Cys1073, Cys1047–Cys1051, and Cys1090–Cys1094. A glycan (N-linked (GlcNAc...) asparagine) is linked at Asn1043. An N-linked (GlcNAc...) asparagine glycan is attached at Asn1182. The cysteines at positions 1213 and 1219 are disulfide-linked. N-linked (GlcNAc...) asparagine glycosylation occurs at Asn1225. 12 cysteine pairs are disulfide-bonded: Cys1232-Cys1279, Cys1240-Cys1283, Cys1251-Cys1264, Cys1287-Cys1325, Cys1298-Cys1302, Cys1335-Cys1340, Cys1351-Cys1407, Cys1358-Cys1411, Cys1369-Cys1388, Cys1415-Cys1459, Cys1426-Cys1430, and Cys1469-Cys1474. Asn1276 carries an N-linked (GlcNAc...) asparagine glycan. N-linked (GlcNAc...) asparagine glycosylation occurs at Asn1366. Asn1500 and Asn1547 each carry an N-linked (GlcNAc...) asparagine glycan. Positions Asp1570–Arg1591 are disordered. A helical transmembrane segment spans residues Val1608–Leu1628. The Cytoplasmic portion of the chain corresponds to Ala1629 to Met1657.

Post-translationally, proteolytic cleavage in the extracellular region generates a 210 kDa soluble form. Extensively N-glycosylated. In terms of tissue distribution, detected on kidney podocytes along the glomerular capillary wall (at protein level).

It is found in the cell membrane. The protein resides in the cell projection. It localises to the secreted. Functionally, plays a role in actin cytoskeleton rearrangement. Its function is as follows. The soluble form promotes endothelial cell migration and filopodia formation during sprouting angiogenesis via a FAK-dependent mechanism. The polypeptide is Thrombospondin type-1 domain-containing protein 7A (THSD7A) (Homo sapiens (Human)).